Here is a 237-residue protein sequence, read N- to C-terminus: Phosphoribosylaminoimidazole-succinocarboxamide synthase (237 aa).

Belongs to the SAICAR synthetase family.

It carries out the reaction 5-amino-1-(5-phospho-D-ribosyl)imidazole-4-carboxylate + L-aspartate + ATP = (2S)-2-[5-amino-1-(5-phospho-beta-D-ribosyl)imidazole-4-carboxamido]succinate + ADP + phosphate + 2 H(+). Its pathway is purine metabolism; IMP biosynthesis via de novo pathway; 5-amino-1-(5-phospho-D-ribosyl)imidazole-4-carboxamide from 5-amino-1-(5-phospho-D-ribosyl)imidazole-4-carboxylate: step 1/2. The polypeptide is Phosphoribosylaminoimidazole-succinocarboxamide synthase (Deinococcus deserti (strain DSM 17065 / CIP 109153 / LMG 22923 / VCD115)).